A 139-amino-acid polypeptide reads, in one-letter code: Translation initiation factor 5A (139 aa).

Lys-36 carries the post-translational modification Hypusine.

This sequence belongs to the eIF-5A family.

Its subcellular location is the cytoplasm. Its function is as follows. Functions by promoting the formation of the first peptide bond. This chain is Translation initiation factor 5A (eif5a), found in Aeropyrum pernix (strain ATCC 700893 / DSM 11879 / JCM 9820 / NBRC 100138 / K1).